The primary structure comprises 168 residues: Crossover junction endodeoxyribonuclease RuvC (168 aa).

Active-site residues include Asp7, Glu66, and Asp138. Residues Asp7, Glu66, and Asp138 each contribute to the Mg(2+) site.

This sequence belongs to the RuvC family. In terms of assembly, homodimer which binds Holliday junction (HJ) DNA. The HJ becomes 2-fold symmetrical on binding to RuvC with unstacked arms; it has a different conformation from HJ DNA in complex with RuvA. In the full resolvosome a probable DNA-RuvA(4)-RuvB(12)-RuvC(2) complex forms which resolves the HJ. Mg(2+) is required as a cofactor.

The protein localises to the cytoplasm. It carries out the reaction Endonucleolytic cleavage at a junction such as a reciprocal single-stranded crossover between two homologous DNA duplexes (Holliday junction).. The RuvA-RuvB-RuvC complex processes Holliday junction (HJ) DNA during genetic recombination and DNA repair. Endonuclease that resolves HJ intermediates. Cleaves cruciform DNA by making single-stranded nicks across the HJ at symmetrical positions within the homologous arms, yielding a 5'-phosphate and a 3'-hydroxyl group; requires a central core of homology in the junction. The consensus cleavage sequence is 5'-(A/T)TT(C/G)-3'. Cleavage occurs on the 3'-side of the TT dinucleotide at the point of strand exchange. HJ branch migration catalyzed by RuvA-RuvB allows RuvC to scan DNA until it finds its consensus sequence, where it cleaves and resolves the cruciform DNA. The polypeptide is Crossover junction endodeoxyribonuclease RuvC (Cereibacter sphaeroides (strain ATCC 17029 / ATH 2.4.9) (Rhodobacter sphaeroides)).